A 545-amino-acid polypeptide reads, in one-letter code: SLAIN motif-containing protein 1 (545 aa).

Positions 14–53 (TTNGLVANAELEVKKLQELVRKLEKQNEQLRNRASAVSNC) form a coiled coil. Low complexity-rich tracts occupy residues 268 to 286 (TTST…SLYS) and 466 to 481 (IPSS…SGIP). Disordered regions lie at residues 268–342 (TTST…IRDC) and 461–526 (QGGS…LQPP). The segment covering 503–522 (STANGSSIPRSKIAQPQRSF) has biased composition (polar residues).

Belongs to the SLAIN motif-containing family.

The protein localises to the cytoplasm. Its subcellular location is the cytoskeleton. Functionally, microtubule plus-end tracking protein that might be involved in the regulation of cytoplasmic microtubule dynamics, microtubule organization and microtubule elongation. The sequence is that of SLAIN motif-containing protein 1 (slain1) from Xenopus tropicalis (Western clawed frog).